We begin with the raw amino-acid sequence, 888 residues long: Collagen alpha chain (888 aa).

Residues 1-627 (APGPDGLTGT…GPPGQPGMSE (627 aa)) are disordered. Residues 3–60 (GPDGLTGTKGSMGEPGTDGEPGSPGPQGAKGETGLAGRRGLTGIPGKQGRQGERGEPG) enclose the Collagen-like 1 domain. Composition is skewed to low complexity over residues 59–73 (PGTA…QPGT) and 148–164 (TPGL…MGPI). Basic and acidic residues predominate over residues 179–190 (RGYDGKDGEPGR). Residues 194–203 (PGPIGQPGIP) are compositionally biased toward low complexity. Pro residues predominate over residues 311–320 (SGPPGPPGPS). Over residues 422–440 (SGSRGAQGPPGAPGSSGQN) the composition is skewed to low complexity. Positions 441–450 (GVDGGTGENG) are enriched in gly residues. Low complexity-rich tracts occupy residues 460 to 475 (ESGA…SAGP) and 508 to 518 (EPGPQGDQGPK). A Collagen-like 2 domain is found at 513-571 (GDQGPKGQKGEVGPVGEKGDKGWTGTPGDPGPQGDRGEPGPPGRDGVDGPPGPRGAPGE). Residues 610–622 (PPGPPGPPGPPGQ) are compositionally biased toward pro residues. Residues 661 to 884 (ENVLKDLDEK…KLEIGPACFH (224 aa)) enclose the Fibrillar collagen NC1 domain. Cystine bridges form between C731–C882 and C793–C833.

This sequence belongs to the fibrillar collagen family. In terms of tissue distribution, component of the acid-insoluble organic matrix of the aragonitic skeleton (at protein level).

The protein localises to the secreted. This is Collagen alpha chain from Acropora millepora (Staghorn coral).